We begin with the raw amino-acid sequence, 2151 residues long: Calpain-type cysteine protease DEK1 (2151 aa).

A signal peptide spans 1 to 32 (MEGDERGVLLACVISGTLFTVFGSGSFWILWA). Topologically, residues 33 to 69 (VNWRPWRLYSWIFARKWPKVLQGPQLDILCGVLSLFA) are extracellular. The helical transmembrane segment at 70–90 (WIVVVSPIAILIGWGSWLIVI) threads the bilayer. The Cytoplasmic portion of the chain corresponds to 91–94 (LDRH). The chain crosses the membrane as a helical span at residues 95–115 (IIGLAIIMAGTALLLAFYSIM). Over 116-126 (LWWRTQWQSSR) the chain is Extracellular. A helical transmembrane segment spans residues 127–147 (AVALLLLLGVALLCAYELCAV). Over 148-163 (YVTAGAHASQQYSPSG) the chain is Cytoplasmic. A helical membrane pass occupies residues 164–184 (FFFGVSAIALAINMLFICRMV). Topologically, residues 185–235 (FNGNGLDVDEYVRRAYKFAYSDCIEVGPVACLPEPPDPNELYPRQTSRASH) are extracellular. A helical transmembrane segment spans residues 236 to 256 (LGLLYLGSLVVLLAYSVLYGL). The Cytoplasmic portion of the chain corresponds to 257–263 (TARESRW). A helical membrane pass occupies residues 264–284 (LGGITSAAVIVLDWNIGACLY). The Extracellular segment spans residues 285–293 (GFKLLQNRV). Residues 294 to 314 (LALFVAGISRLFLICFGIHYW) form a helical membrane-spanning segment. Residues 315–319 (YLGHC) lie on the Cytoplasmic side of the membrane. The chain crosses the membrane as a helical span at residues 320-340 (ISYIFVASVLSGAAVSRHLSI). The Extracellular segment spans residues 341–615 (TDPSAARRDA…LLLHHVAGTP (275 aa)). 2 disordered regions span residues 363 to 393 (RRKE…GHTG) and 405 to 442 (CTAD…SCRS). Positions 369–388 (SSSSSSDGCGSSIKRSSSID) are enriched in low complexity. Residues 405 to 420 (CTADNLTRTGSSQEGI) are compositionally biased toward polar residues. Residues 430–442 (RPSLGLRSSSCRS) are compositionally biased toward low complexity. A helical transmembrane segment spans residues 616 to 636 (ERAWGLFSLVFILETIIVAIF). At 637–652 (RPKTITIINSSHQQFE) the chain is on the cytoplasmic side. The chain crosses the membrane as a helical span at residues 653–673 (FGFSVLLLSPVVCSIMAFLRS). Residues 674-686 (LQVEEMALTSKSR) are Extracellular-facing. Residues 687–707 (KYGFVAWLLSTSVGLSLSFLS) traverse the membrane as a helical segment. Residues 708–711 (KSSV) lie on the Cytoplasmic side of the membrane. Residues 712 to 732 (LLGISLTVPLMAACLSIAVPI) form a helical membrane-spanning segment. Topologically, residues 733–760 (WMHNGYQFWVPQLSCGDQARDLRSPRIK) are extracellular. Residues 761–782 (GFILWICVVLFAGSVISLGAII) form a helical membrane-spanning segment. Topologically, residues 783 to 813 (SAKPLDDLKYKLFSARENNVTSPYTSSVYLG) are cytoplasmic. A helical transmembrane segment spans residues 814 to 834 (WAMSSGIALVVTAILPIVSWF). Over 835–844 (ATYRFSHSSA) the chain is Extracellular. Residues 845–865 (VCLMIFSVVLVAFCGTSYLEV) form a helical membrane-spanning segment. The Cytoplasmic portion of the chain corresponds to 866 to 878 (VKSRDDQLPTKGD). The helical transmembrane segment at 879–899 (FLAALLPLACIPALLSLCCGM) threads the bilayer. The Extracellular segment spans residues 900–912 (VKWKDDCWILSRG). A helical transmembrane segment spans residues 913–933 (VYVFFSIGLLLLFGAIAAVIA). The Cytoplasmic portion of the chain corresponds to 934–936 (VKP). A helical membrane pass occupies residues 937–957 (WTIGVSFLLVLFLMVVTIGVI). The Extracellular segment spans residues 958–971 (HLWASNNFYLTRKQ). Residues 972-992 (TSFVCFLALLLGLAAFLLGWH) form a helical membrane-spanning segment. Topologically, residues 993 to 1006 (QDKAFAGASVGYFT) are cytoplasmic. A helical transmembrane segment spans residues 1007–1027 (FLSLLAGRALAVLLSPPIVVY). Residues 1028 to 1050 (SPRVLPVYVYDAHADCGKNVSAA) are Extracellular-facing. A helical membrane pass occupies residues 1051-1071 (FLVLYGIALATEGWGVVASLI). At 1072–2151 (IYPPFAGAAV…TKASIVLEAL (1080 aa)) the chain is on the cytoplasmic side. Calpain catalytic domains lie at 1407–1600 (SGKH…DMID) and 1695–1997 (QFTD…CRVY). Residues Cys1761, His1919, and Asn1939 contribute to the active site.

This sequence belongs to the peptidase C2 family. Autocatalytic proteolytic cleavage leading to the production of mainly cytoplasmic localized subproducts of about 85 and 120 kDa. In terms of tissue distribution, mostly expressed in meristems and organ primordia. Expressed at low levels in young and germinating seeds at 10 ppm and in seedling roots at 67 ppm. Present in most tissues at a low level.

Its subcellular location is the cell membrane. It is found in the endosome membrane. It localises to the endoplasmic reticulum membrane. The protein resides in the cytoplasm. Its function is as follows. Essential protease involved in epiderm development. Required for aleurone cell development in the endosperm probably by maintaining and restricting the aleurone and embryonic epidermal L1 cell-layer fates as well as meristems organization. Involved in the maintenance of adaxial/abaxial axis information in developing leaves, probably by regulating cell proliferation and expansion. Does not need calcium ions to be active. Required for the formation of giant cells in sepals by determining cell fate and promoting endoreplication. The sequence is that of Calpain-type cysteine protease DEK1 from Arabidopsis thaliana (Mouse-ear cress).